A 194-amino-acid chain; its full sequence is Orotate phosphoribosyltransferase (194 aa).

5-phospho-alpha-D-ribose 1-diphosphate contacts are provided by residues Lys-98 and 122-130 (EDVLTTGGS). 2 residues coordinate orotate: Thr-126 and Arg-154.

The protein belongs to the purine/pyrimidine phosphoribosyltransferase family. PyrE subfamily. In terms of assembly, homodimer. Mg(2+) is required as a cofactor.

It catalyses the reaction orotidine 5'-phosphate + diphosphate = orotate + 5-phospho-alpha-D-ribose 1-diphosphate. It functions in the pathway pyrimidine metabolism; UMP biosynthesis via de novo pathway; UMP from orotate: step 1/2. Functionally, catalyzes the transfer of a ribosyl phosphate group from 5-phosphoribose 1-diphosphate to orotate, leading to the formation of orotidine monophosphate (OMP). This is Orotate phosphoribosyltransferase from Deinococcus radiodurans (strain ATCC 13939 / DSM 20539 / JCM 16871 / CCUG 27074 / LMG 4051 / NBRC 15346 / NCIMB 9279 / VKM B-1422 / R1).